The chain runs to 200 residues: Probable GTP-binding protein EngB (200 aa).

The EngB-type G domain maps to 24-199 (EGAEVAFAGR…RGVIGGWLGL (176 aa)). GTP-binding positions include 32 to 39 (GRSNAGKS), 59 to 63 (GRTQQ), 77 to 80 (DLPG), 144 to 147 (TKAD), and 178 to 180 (FSG). Mg(2+) contacts are provided by S39 and T61.

The protein belongs to the TRAFAC class TrmE-Era-EngA-EngB-Septin-like GTPase superfamily. EngB GTPase family. Requires Mg(2+) as cofactor.

Necessary for normal cell division and for the maintenance of normal septation. This is Probable GTP-binding protein EngB from Stenotrophomonas maltophilia (strain K279a).